The sequence spans 464 residues: E3 ubiquitin-protein ligase ITT1 (464 aa).

The tract at residues 176-455 (SNYHCCICME…EAYSGCYGRL (280 aa)) is TRIAD supradomain. 10 residues coordinate Zn(2+): cysteine 180, cysteine 183, cysteine 207, cysteine 210, cysteine 290, cysteine 300, cysteine 316, cysteine 319, cysteine 402, and cysteine 405. An RING-type 1 zinc finger spans residues 180-236 (CCICMEMEKGVRMIKLPCENANVEHYLCRGCAKSYFTAMIQENRISSVRCPQCEYKE). The IBR-type zinc-finger motif lies at 267 to 338 (DTELCERYEK…HAWHGYNNKC (72 aa)). The RING-type 2; atypical zinc finger occupies 402–431 (CPKCKVVVERSEGCNKMKCEVCGTLFCFIC). Residue cysteine 415 is part of the active site. Positions 420, 423, 428, 431, 443, and 451 each coordinate Zn(2+).

It belongs to the RBR family. RNF14 subfamily. Interacts with translation release factors eRF1 (SUP45) and eRF3 (SUP35) in vitro.

The enzyme catalyses [E2 ubiquitin-conjugating enzyme]-S-ubiquitinyl-L-cysteine + [acceptor protein]-L-lysine = [E2 ubiquitin-conjugating enzyme]-L-cysteine + [acceptor protein]-N(6)-ubiquitinyl-L-lysine.. It functions in the pathway protein modification; protein ubiquitination. E3 ubiquitin-protein ligase involved in translation quality control. Involved in the rescue of stalled ribosomes by promoting ubiquitination and degradation of proteins on stalled ribosomes. Specifically required to resolve RNA-protein cross-links caused by reactive aldehydes, which trigger translation stress by stalling ribosomes: acts by catalying 'Lys-6'-linked ubiquitination of RNA-protein cross-links, leading to their degradation. Interacts with the translation termination factors eRF1 (SUP45) and eRF3 (SUP35); overexpression decreases the efficiency of translation termination. The sequence is that of E3 ubiquitin-protein ligase ITT1 from Saccharomyces cerevisiae (strain ATCC 204508 / S288c) (Baker's yeast).